Consider the following 562-residue polypeptide: NAD-dependent malic enzyme (562 aa).

Tyrosine 101 serves as the catalytic Proton donor. Position 154 (arginine 154) interacts with NAD(+). Lysine 172 acts as the Proton acceptor in catalysis. Residues glutamate 243, aspartate 244, and aspartate 267 each contribute to the a divalent metal cation site. Aspartate 267 and asparagine 415 together coordinate NAD(+).

The protein belongs to the malic enzymes family. As to quaternary structure, homotetramer. The cofactor is Mg(2+). It depends on Mn(2+) as a cofactor.

The catalysed reaction is (S)-malate + NAD(+) = pyruvate + CO2 + NADH. It catalyses the reaction oxaloacetate + H(+) = pyruvate + CO2. The polypeptide is NAD-dependent malic enzyme (Shewanella sediminis (strain HAW-EB3)).